The following is a 114-amino-acid chain: T cell receptor beta variable 10-3 (114 aa).

Residues 1–21 (MGTRLFFYVALCLLWTGHMDA) form the signal peptide. Residues 22–114 (GITQSPRHKV…TSVYFCAISE (93 aa)) form the Ig-like domain. Cys42 and Cys110 are joined by a disulfide.

Alpha-beta TR is a heterodimer composed of an alpha and beta chain; disulfide-linked. The alpha-beta TR is associated with the transmembrane signaling CD3 coreceptor proteins to form the TR-CD3 (TcR or TCR). The assembly of alpha-beta TR heterodimers with CD3 occurs in the endoplasmic reticulum where a single alpha-beta TR heterodimer associates with one CD3D-CD3E heterodimer, one CD3G-CD3E heterodimer and one CD247 homodimer forming a stable octameric structure. CD3D-CD3E and CD3G-CD3E heterodimers preferentially associate with TR alpha and TR beta chains, respectively. The association of the CD247 homodimer is the last step of TcR assembly in the endoplasmic reticulum and is required for transport to the cell surface.

The protein localises to the cell membrane. Its function is as follows. V region of the variable domain of T cell receptor (TR) beta chain that participates in the antigen recognition. Alpha-beta T cell receptors are antigen specific receptors which are essential to the immune response and are present on the cell surface of T lymphocytes. Recognize peptide-major histocompatibility (MH) (pMH) complexes that are displayed by antigen presenting cells (APC), a prerequisite for efficient T cell adaptive immunity against pathogens. Binding of alpha-beta TR to pMH complex initiates TR-CD3 clustering on the cell surface and intracellular activation of LCK that phosphorylates the ITAM motifs of CD3G, CD3D, CD3E and CD247 enabling the recruitment of ZAP70. In turn ZAP70 phosphorylates LAT, which recruits numerous signaling molecules to form the LAT signalosome. The LAT signalosome propagates signal branching to three major signaling pathways, the calcium, the mitogen-activated protein kinase (MAPK) kinase and the nuclear factor NF-kappa-B (NF-kB) pathways, leading to the mobilization of transcription factors that are critical for gene expression and essential for T cell growth and differentiation. The T cell repertoire is generated in the thymus, by V-(D)-J rearrangement. This repertoire is then shaped by intrathymic selection events to generate a peripheral T cell pool of self-MH restricted, non-autoaggressive T cells. Post-thymic interaction of alpha-beta TR with the pMH complexes shapes TR structural and functional avidity. The polypeptide is T cell receptor beta variable 10-3 (Homo sapiens (Human)).